The following is a 102-amino-acid chain: Large ribosomal subunit protein bL21 (102 aa).

It belongs to the bacterial ribosomal protein bL21 family. As to quaternary structure, part of the 50S ribosomal subunit. Contacts protein L20.

Functionally, this protein binds to 23S rRNA in the presence of protein L20. The protein is Large ribosomal subunit protein bL21 of Lachnospira eligens (strain ATCC 27750 / DSM 3376 / VPI C15-48 / C15-B4) (Eubacterium eligens).